The chain runs to 819 residues: Pentatricopeptide repeat-containing protein At5g02860 (819 aa).

The interval 57-93 is disordered; sequence QNPNSRQPISSQTSRNRNRTRIGKSRDPNLGKPWSYH. PPR repeat units lie at residues 172 to 206, 207 to 241, 242 to 277, 278 to 312, 313 to 347, 348 to 382, 383 to 417, 418 to 452, 453 to 487, 488 to 522, 523 to 557, 558 to 592, 593 to 627, 628 to 662, 663 to 697, 698 to 732, 733 to 767, and 768 to 802; these read DNSVVAIIISMLGKEGRVSSAANMFNGLQEDGFSL, DVYSYTSLISAFANSGRYREAVNVFKKMEEDGCKP, TLITYNVILNVFGKMGTPWNKITSLVEKMKSDGIAP, DAYTYNTLITCCKRGSLHQEAAQVFEEMKAAGFSY, DKVTYNALLDVYGKSHRPKEAMKVLNEMVLNGFSP, SIVTYNSLISAYARDGMLDEAMELKNQMAEKGTKP, DVFTYTTLLSGFERAGKVESAMSIFEEMRNAGCKP, NICTFNAFIKMYGNRGKFTEMMKIFDEINVCGLSP, DIVTWNTLLAVFGQNGMDSEVSGVFKEMKRAGFVP, ERETFNTLISAYSRCGSFEQAMTVYRRMLDAGVTP, DLSTYNTVLAALARGGMWEQSEKVLAEMEDGRCKP, NELTYCSLLHAYANGKEIGLMHSLAEEVYSGVIEP, RAVLLKTLVLVCSKCDLLPEAERAFSELKERGFSP, DITTLNSMVSIYGRRQMVAKANGVLDYMKERGFTP, SMATYNSLMYMHSRSADFGKSEEILREILAKGIKP, DIISYNTVIYAYCRNTRMRDASRIFSEMRNSGIVP, DVITYNTFIGSYAADSMFEEAIGVVRYMIKHGCRP, and NQNTYNSIVDGYCKLNRKDEAKLFVEDLRNLDPHA.

It belongs to the PPR family. P subfamily.

In Arabidopsis thaliana (Mouse-ear cress), this protein is Pentatricopeptide repeat-containing protein At5g02860.